The primary structure comprises 81 residues: Small ribosomal subunit protein bS16 (81 aa).

Belongs to the bacterial ribosomal protein bS16 family.

The sequence is that of Small ribosomal subunit protein bS16 from Clostridium acetobutylicum (strain ATCC 824 / DSM 792 / JCM 1419 / IAM 19013 / LMG 5710 / NBRC 13948 / NRRL B-527 / VKM B-1787 / 2291 / W).